The following is a 275-amino-acid chain: 4-deoxy-L-threo-5-hexosulose-uronate ketol-isomerase (275 aa).

Zn(2+) contacts are provided by His-193, His-195, Glu-200, and His-242.

Belongs to the KduI family. It depends on Zn(2+) as a cofactor.

It catalyses the reaction 5-dehydro-4-deoxy-D-glucuronate = 3-deoxy-D-glycero-2,5-hexodiulosonate. The protein operates within glycan metabolism; pectin degradation; 2-dehydro-3-deoxy-D-gluconate from pectin: step 4/5. Functionally, catalyzes the isomerization of 5-dehydro-4-deoxy-D-glucuronate to 3-deoxy-D-glycero-2,5-hexodiulosonate. The sequence is that of 4-deoxy-L-threo-5-hexosulose-uronate ketol-isomerase from Bacillus pumilus (strain SAFR-032).